A 402-amino-acid chain; its full sequence is 5-methylphenazine-1-carboxylate 1-monooxygenase (402 aa).

FAD contacts are provided by residues 14–15 (IG), 35–36 (ES), 43–45 (LGV), Arg106, Val132, Arg191, and Asp310. Positions 368-385 (REKEEWAAASRPKTEKSA) are enriched in basic and acidic residues. The disordered stretch occupies residues 368 to 402 (REKEEWAAASRPKTEKSAALEAITGSYRNQVERPR).

Monomer in solution. Probably interacts transiently with PhzM. Requires FAD as cofactor.

The enzyme catalyses 5-methyl-phenazine-1-carboxylate + NADH + O2 + 2 H(+) = pyocyanin + CO2 + NAD(+) + H2O. It functions in the pathway secondary metabolite biosynthesis; pyocyanine biosynthesis. Functionally, involved in the biosynthesis of pyocyanine, a blue-pigmented phenazine derivative, which plays a role in virulence. Catalyzes the oxidative decarboxylation of 5-methylphenazine-1-carboxylate (5-methyl-PCA) to pyocyanine. Can also act on phenazine-1-carboxylate (PCA), converting it into 1-hydroxyphenazine (1-HP). However, PCA is a poor substrate. The protein is 5-methylphenazine-1-carboxylate 1-monooxygenase of Pseudomonas aeruginosa (strain ATCC 15692 / DSM 22644 / CIP 104116 / JCM 14847 / LMG 12228 / 1C / PRS 101 / PAO1).